The chain runs to 870 residues: DNA mismatch repair protein MutS (870 aa).

ATP is bound at residue 608 to 615; it reads GPNMAGKS.

Belongs to the DNA mismatch repair MutS family.

In terms of biological role, this protein is involved in the repair of mismatches in DNA. It is possible that it carries out the mismatch recognition step. This protein has a weak ATPase activity. The sequence is that of DNA mismatch repair protein MutS from Persephonella marina (strain DSM 14350 / EX-H1).